We begin with the raw amino-acid sequence, 163 residues long: Cytochrome b6-f complex subunit 4 (163 aa).

3 helical membrane-spanning segments follow: residues 36–56 (LLYI…GLAV), 95–115 (LLGV…PFLE), and 131–151 (TVFL…TLPI).

This sequence belongs to the cytochrome b family. PetD subfamily. In terms of assembly, the 4 large subunits of the cytochrome b6-f complex are cytochrome b6, subunit IV (17 kDa polypeptide, petD), cytochrome f and the Rieske protein, while the 4 small subunits are petG, petL, petM and petN. The complex functions as a dimer.

It localises to the plastid. The protein resides in the chloroplast thylakoid membrane. Functionally, component of the cytochrome b6-f complex, which mediates electron transfer between photosystem II (PSII) and photosystem I (PSI), cyclic electron flow around PSI, and state transitions. The polypeptide is Cytochrome b6-f complex subunit 4 (Pelargonium hortorum (Common geranium)).